The primary structure comprises 428 residues: Glutamate-1-semialdehyde 2,1-aminomutase (428 aa).

The residue at position 267 (Lys267) is an N6-(pyridoxal phosphate)lysine.

This sequence belongs to the class-III pyridoxal-phosphate-dependent aminotransferase family. HemL subfamily. Homodimer. It depends on pyridoxal 5'-phosphate as a cofactor.

Its subcellular location is the cytoplasm. It carries out the reaction (S)-4-amino-5-oxopentanoate = 5-aminolevulinate. Its pathway is porphyrin-containing compound metabolism; protoporphyrin-IX biosynthesis; 5-aminolevulinate from L-glutamyl-tRNA(Glu): step 2/2. In Trichlorobacter lovleyi (strain ATCC BAA-1151 / DSM 17278 / SZ) (Geobacter lovleyi), this protein is Glutamate-1-semialdehyde 2,1-aminomutase.